The primary structure comprises 1989 residues: MTKVPPAFDFSFLNDEEARKILQVLERNEELQRAEKDRISKLQKTKRDIRWLQGVTGEWFEEIQRKKFCNETDVSQMLKQPLTYRLSKEMAKNDPIELPTSRSKNVTNQKKPTPFSSRMSFRSSFASLFSFRKSGKETSKLPSLGQKGCDGHAGPPMPVRGAAVQAKIYNSPLENHLVDSTFVPKPAVMREESGMPPPWDASLLENEFFQVLDDLDSKLAQEQSASSVNTRTPLNYGSRTQFGHFYSSGNRHGNITERHKKHYNETSNMSIYDILRPGTPREGFKTFSPRTSTIYDMYRTREPRVFKEDYVQKNTFGSTSLCFDSRQRSALPATGHFTARSLHFPATTQSKSGFIPPRHQQSPKRTPLSSIIWNRSDSSRDRENQEEFLRAPSPMEIDPADKYVYPRGFQENKRYESYHSQNVYQRVSLNAPMENAMSPDTFENSENMPFYHQSNTFTRSFFSNTFGRSGEQRRFGQGPFWGQEKGHSFWSDFHRSRKSFSSSDRDFEMISMEANSVSAIHGHNVSSEHWESFSSGYGTDVSRGQEEPHPWQFDFQRSTLDSMVVSHGNETQLTPHFGTPNVCSMTGSSYHVKSSELVSQQDSSPVEVHINKEASSFGIAQTLASSFKTSFSQISDDRRNPQSPNLQNPTVTLQKIFPNKPASHPMRSHTEVTVTSSNSVDSLPLAKSQPNILVTEVNNEKDLNESISEEDKQLSKMDQTNKAGEIPQPVSQTGISNSLPDFQNPLSQDSAKSNGFGFNASTIISSKKSPRVFSRKDTSKMYIPHTDKSNDIKQDKRFTENRKLGSTASLPFIQEHRTPPSFPRTDQGCHQELTVNNEDISRIITNNHWSSALTDTQNAQYSKCKLTPGHKTSCDSLDLSSAALPDSSPSKNSSLDAPVVPSTTVFSRRSPSDKDPSLGEREEKDNAGKNQKNQFIVSHSENQERNDSPVPTHDEVVDVKCHSHSPFRNERGKGKIRHHISCIEKLSKTESISVPTSDHRSLIEANQSNSKVSELDTIYCTLPRKSSSFLIHGRQSGSKIMAASLRNGPPPFQIKNNVEDAMGNYMLNKFSPSSPESANECSKVLSDSALEAPEATERMTNVKSSGSTSVRKGPLPFLINRAMSCPSGEPHASTGREGRKKPLTSGMDASELTPRAWERIISPVESDSSVRDCSLTKRQHQKENFQEYTEKEGKMAASRRSVFALSNEDPLPFCSDLSGKERGKTLHKVKTTSTFSVSGDEDNVKCLEVVSIYYTLPRKPSKKFCNLLQQYTQNTNLLIESPQVETETFPNALEKDKQNYSTREQSGTPSCENLKMSVNSDQTLTTENMTAFRLSNRGPLAPTLQEMASVEAAVSLPEEESKAREIFSDNLAKTPLGDSENKKERGKKLQSETLHTSLMLQRKNVSEEKSENCQQSINSSNSGPSSLPALSEVNIGNSQTRRSSWECTGSGRAIPFTGSGKCPQKDHTSTAVGDGSSGSQPREGRGDIGTNCQKMTNKTLSHSESQVFALTPALHKLQLGEETQSDEPNLESLQSEPRELPQRSQEANMTESRKAEDEMQKSAWDQPSLPEGNKNKTNLDDLVKGENRSSVKHRLAAMSKASRKFPAKDVSPRRHVATIFPQSGSRSGFDHLSLGTVECNPLFPEPTPKSAESIGESRLSENGKHVKKSENLLPITVLPNREPSTHVSNQKSNSISQRHQNEFKNVSESPSKHENSKDVTAAQNLVRESGAPSPITFTSLREAEFSDNQRRLSPPFPLEPAQKSRVSSPLASFLQQQRSASSLEWEPEPHLYRSKSLKSINVHGDLLRKSHPPKVRERHFSESTSIDNALSRLTLGNEFSVNNGYSRRFRSFSELPSCDGNESWAYRSGTKTGPRSAISIYRPIDYGIFGKEQQLAFLENVKRSLTQGRLWKPSFLKNPGFLKDDLRNPPNPSESLSSNSPSSQVPEDGLSPSEPLNIYEDDPVDSDCDTDTTTDDEYYLDENDKESEL.

The RabBD domain maps to 7–63 (AFDFSFLNDEEARKILQVLERNEELQRAEKDRISKLQKTKRDIRWLQGVTGEWFEEI). 2 disordered regions span residues 93–117 (NDPIELPTSRSKNVTNQKKPTPFSS) and 348–391 (TQSK…FLRA). 2 stretches are compositionally biased toward polar residues: residues 100 to 111 (TSRSKNVTNQKK) and 359 to 376 (HQQSPKRTPLSSIIWNRS). A compositionally biased stretch (basic and acidic residues) spans 377-389 (DSSRDRENQEEFL). A Phosphoserine modification is found at Ser-603. 3 disordered regions span residues 631-651 (FSQISDDRRNPQSPNLQNPTV), 806-827 (STASLPFIQEHRTPPSFPRTDQ), and 882-933 (AALP…NQKN). Positions 641–651 (PQSPNLQNPTV) are enriched in polar residues. Phosphoserine is present on residues Ser-806 and Ser-809. Residues 891 to 909 (KNSSLDAPVVPSTTVFSRR) are compositionally biased toward polar residues. Residues 910 to 927 (SPSDKDPSLGEREEKDNA) are compositionally biased toward basic and acidic residues. Phosphoserine occurs at positions 1028 and 1086. Disordered stretches follow at residues 1094 to 1113 (EATERMTNVKSSGSTSVRKG), 1124 to 1152 (SCPSGEPHASTGREGRKKPLTSGMDASEL), and 1365 to 1493 (EIFS…TNCQ). Over residues 1098–1110 (RMTNVKSSGSTSV) the composition is skewed to polar residues. Ser-1124 is subject to Phosphoserine. Over residues 1379 to 1390 (SENKKERGKKLQ) the composition is skewed to basic and acidic residues. The span at 1416-1431 (SINSSNSGPSSLPALS) shows a compositional bias: low complexity. Over residues 1434 to 1447 (NIGNSQTRRSSWEC) the composition is skewed to polar residues. At Ser-1505 the chain carries Phosphoserine. Disordered regions lie at residues 1521-1590 (EETQ…NRSS) and 1644-1737 (PEPT…PITF). Composition is skewed to basic and acidic residues over residues 1551–1560 (ESRKAEDEMQ), 1573–1589 (NKNKTNLDDLVKGENRS), and 1658–1670 (RLSENGKHVKKSE). The span at 1685–1709 (THVSNQKSNSISQRHQNEFKNVSES) shows a compositional bias: polar residues. Phosphoserine is present on residues Ser-1753, Ser-1768, Ser-1821, and Ser-1851. The interval 1921-1989 (FLKDDLRNPP…LDENDKESEL (69 aa)) is disordered. Residues 1933–1943 (SESLSSNSPSS) are compositionally biased toward low complexity. The span at 1959-1989 (YEDDPVDSDCDTDTTTDDEYYLDENDKESEL) shows a compositional bias: acidic residues.

Interacts with RAB27A. Expressed in keratinocytes.

May act as Rab effector protein and play a role in vesicle trafficking. The protein is Exophilin-5 of Homo sapiens (Human).